A 189-amino-acid chain; its full sequence is Adenylate kinase (189 aa).

11 to 16 (GSGKGT) lines the ATP pocket. Residues 31 to 60 (STGDVLRAEIKNGTELGKTAKGYIDQGQLI) are NMP. Residues Thr32, Arg37, 58-60 (QLI), 86-89 (GFPR), and Gln93 each bind AMP. Residues 127-137 (KRGKESGRADD) form an LID region. Arg128 provides a ligand contact to ATP. Arg134 and Arg145 together coordinate AMP. Gly173 lines the ATP pocket.

This sequence belongs to the adenylate kinase family. In terms of assembly, monomer.

The protein localises to the cytoplasm. It carries out the reaction AMP + ATP = 2 ADP. Its pathway is purine metabolism; AMP biosynthesis via salvage pathway; AMP from ADP: step 1/1. Catalyzes the reversible transfer of the terminal phosphate group between ATP and AMP. Plays an important role in cellular energy homeostasis and in adenine nucleotide metabolism. This chain is Adenylate kinase, found in Bacteroides fragilis (strain ATCC 25285 / DSM 2151 / CCUG 4856 / JCM 11019 / LMG 10263 / NCTC 9343 / Onslow / VPI 2553 / EN-2).